A 258-amino-acid polypeptide reads, in one-letter code: Trypsin eta (258 aa).

Positions 1–22 are cleaved as a signal peptide; the sequence is MNKVILRILALLFLLGIGAVSA. The propeptide at 23–27 is activation peptide; the sequence is QPDGR. The Peptidase S1 domain occupies 28 to 258; the sequence is IVGGADTTNY…YFKDWIASRV (231 aa). A disulfide bridge connects residues Cys59 and Cys75. Active-site charge relay system residues include His74 and Asp120. Cystine bridges form between Cys185–Cys200 and Cys211–Cys235. Catalysis depends on Ser215, which acts as the Charge relay system.

It belongs to the peptidase S1 family.

The protein localises to the secreted. The protein resides in the extracellular space. It catalyses the reaction Preferential cleavage: Arg-|-Xaa, Lys-|-Xaa.. The polypeptide is Trypsin eta (etaTry) (Drosophila erecta (Fruit fly)).